We begin with the raw amino-acid sequence, 548 residues long: Membrane protein insertase YidC (548 aa).

Residues 6–26 traverse the membrane as a helical segment; sequence NLLVIALLFVSFMIWQAWEQD. Positions 28-55 are disordered; it reads NPQPQAQQTTQTTTTAAGSAADQGVPAS. Low complexity predominate over residues 30-50; sequence QPQAQQTTQTTTTAAGSAADQ. The next 4 helical transmembrane spans lie at 350-370, 420-440, 458-478, and 499-519; these read FVGN…GIMY, LGGC…YYML, LSAQ…MFFI, and PVIF…YYIV.

This sequence belongs to the OXA1/ALB3/YidC family. Type 1 subfamily. As to quaternary structure, interacts with the Sec translocase complex via SecD. Specifically interacts with transmembrane segments of nascent integral membrane proteins during membrane integration.

The protein localises to the cell inner membrane. Required for the insertion and/or proper folding and/or complex formation of integral membrane proteins into the membrane. Involved in integration of membrane proteins that insert both dependently and independently of the Sec translocase complex, as well as at least some lipoproteins. Aids folding of multispanning membrane proteins. The sequence is that of Membrane protein insertase YidC from Shigella boydii serotype 18 (strain CDC 3083-94 / BS512).